The chain runs to 101 residues: NAD(P)H-quinone oxidoreductase subunit 4L, chloroplastic (101 aa).

The next 3 helical transmembrane spans lie at 2–22, 32–52, and 61–81; these read MLEH…YGLI, MCLE…SDFF, and IFSI…SAIV.

The protein belongs to the complex I subunit 4L family. As to quaternary structure, NDH is composed of at least 16 different subunits, 5 of which are encoded in the nucleus.

It is found in the plastid. It localises to the chloroplast thylakoid membrane. It catalyses the reaction a plastoquinone + NADH + (n+1) H(+)(in) = a plastoquinol + NAD(+) + n H(+)(out). The catalysed reaction is a plastoquinone + NADPH + (n+1) H(+)(in) = a plastoquinol + NADP(+) + n H(+)(out). In terms of biological role, NDH shuttles electrons from NAD(P)H:plastoquinone, via FMN and iron-sulfur (Fe-S) centers, to quinones in the photosynthetic chain and possibly in a chloroplast respiratory chain. The immediate electron acceptor for the enzyme in this species is believed to be plastoquinone. Couples the redox reaction to proton translocation, and thus conserves the redox energy in a proton gradient. This Citrus sinensis (Sweet orange) protein is NAD(P)H-quinone oxidoreductase subunit 4L, chloroplastic.